The following is a 361-amino-acid chain: Histidinol-phosphate aminotransferase (361 aa).

Residues glycine 26 to serine 45 form a disordered region. Lysine 222 bears the N6-(pyridoxal phosphate)lysine mark.

Belongs to the class-II pyridoxal-phosphate-dependent aminotransferase family. Histidinol-phosphate aminotransferase subfamily. It depends on pyridoxal 5'-phosphate as a cofactor.

The catalysed reaction is L-histidinol phosphate + 2-oxoglutarate = 3-(imidazol-4-yl)-2-oxopropyl phosphate + L-glutamate. The protein operates within amino-acid biosynthesis; L-histidine biosynthesis; L-histidine from 5-phospho-alpha-D-ribose 1-diphosphate: step 7/9. The polypeptide is Histidinol-phosphate aminotransferase (hisC) (Haloferax volcanii (strain ATCC 29605 / DSM 3757 / JCM 8879 / NBRC 14742 / NCIMB 2012 / VKM B-1768 / DS2) (Halobacterium volcanii)).